Reading from the N-terminus, the 247-residue chain is Phycocyanobilin:ferredoxin oxidoreductase (247 aa).

The protein belongs to the HY2 family.

It catalyses the reaction (2R,3Z)-phycocyanobilin + 4 oxidized [2Fe-2S]-[ferredoxin] = biliverdin IXalpha + 4 reduced [2Fe-2S]-[ferredoxin] + 4 H(+). In terms of biological role, catalyzes the four-electron reduction of biliverdin IX-alpha (2-electron reduction at both the A and D rings); the reaction proceeds via an isolatable 2-electron intermediate, 181,182-dihydrobiliverdin. The sequence is that of Phycocyanobilin:ferredoxin oxidoreductase from Synechococcus sp. (strain CC9605).